The primary structure comprises 168 residues: uncharacterized protein (168 aa).

2 consecutive CBS domains span residues 20 to 77 and 117 to 168; these read IMKK…NEDL and MTRK…EALI.

This is an uncharacterized protein from Methanocaldococcus jannaschii (strain ATCC 43067 / DSM 2661 / JAL-1 / JCM 10045 / NBRC 100440) (Methanococcus jannaschii).